A 288-amino-acid polypeptide reads, in one-letter code: DegV domain-containing protein DR_1903 (288 aa).

The DegV domain occupies 2–280 (IAVTTESTAD…PGVVAVLAFP (279 aa)). Residues Thr59 and Thr93 each contribute to the hexadecanoate site.

Functionally, may bind long-chain fatty acids, such as palmitate, and may play a role in lipid transport or fatty acid metabolism. This Deinococcus radiodurans (strain ATCC 13939 / DSM 20539 / JCM 16871 / CCUG 27074 / LMG 4051 / NBRC 15346 / NCIMB 9279 / VKM B-1422 / R1) protein is DegV domain-containing protein DR_1903.